The following is a 66-amino-acid chain: UPF0370 protein CKO_00315 (66 aa).

Residues 4–24 (LAKYWWILVLVFLVGVLINVI) form a helical membrane-spanning segment. A disordered region spans residues 39–66 (KPELPPHRDFNDKWDDDDDWPKKDQPKK). The span at 42–51 (LPPHRDFNDK) shows a compositional bias: basic and acidic residues.

The protein belongs to the UPF0370 family.

It localises to the cell membrane. In Citrobacter koseri (strain ATCC BAA-895 / CDC 4225-83 / SGSC4696), this protein is UPF0370 protein CKO_00315.